We begin with the raw amino-acid sequence, 29 residues long: Phospholemman-like protein (29 aa).

It belongs to the FXYD family. In terms of processing, phosphorylated by protein kinase C.

It is found in the membrane. Induces a hyperpolarization-activated chloride current when expressed in Xenopus oocytes. In Scyliorhinus canicula (Small-spotted catshark), this protein is Phospholemman-like protein.